We begin with the raw amino-acid sequence, 303 residues long: 1-phosphofructokinase (303 aa).

Position 248–249 (248–249) interacts with ATP; that stretch reads GD. The active-site Proton acceptor is Asp249.

The protein belongs to the carbohydrate kinase PfkB family.

The enzyme catalyses beta-D-fructose 1-phosphate + ATP = beta-D-fructose 1,6-bisphosphate + ADP + H(+). Functionally, catalyzes the ATP-dependent phosphorylation of fructose-l-phosphate to fructose-l,6-bisphosphate. The polypeptide is 1-phosphofructokinase (fruK) (Bacillus subtilis (strain 168)).